Consider the following 170-residue polypeptide: UPF0316 protein CLK_3798 (170 aa).

The next 2 membrane-spanning stretches (helical) occupy residues 1-21 (MLSY…LMTI) and 36-56 (IIGF…LSGI).

It belongs to the UPF0316 family.

Its subcellular location is the cell membrane. The protein is UPF0316 protein CLK_3798 of Clostridium botulinum (strain Loch Maree / Type A3).